The sequence spans 231 residues: Large ribosomal subunit protein uL1 (231 aa).

The protein belongs to the universal ribosomal protein uL1 family. As to quaternary structure, part of the 50S ribosomal subunit.

Functionally, binds directly to 23S rRNA. The L1 stalk is quite mobile in the ribosome, and is involved in E site tRNA release. Its function is as follows. Protein L1 is also a translational repressor protein, it controls the translation of the L11 operon by binding to its mRNA. This is Large ribosomal subunit protein uL1 from Acetivibrio thermocellus (strain ATCC 27405 / DSM 1237 / JCM 9322 / NBRC 103400 / NCIMB 10682 / NRRL B-4536 / VPI 7372) (Clostridium thermocellum).